The following is a 427-amino-acid chain: Adenylosuccinate synthetase (427 aa).

Residues 12 to 18 (GDEGKGK) and 40 to 42 (GHT) contribute to the GTP site. The Proton acceptor role is filled by Asp-13. Residues Asp-13 and Gly-40 each coordinate Mg(2+). IMP contacts are provided by residues 13–16 (DEGK), 38–41 (NAGH), Thr-128, Arg-142, Gln-223, Thr-238, and Arg-302. His-41 acts as the Proton donor in catalysis. 298–304 (TTTGRAR) serves as a coordination point for substrate. GTP contacts are provided by residues Arg-304, 330–332 (KLD), and 412–414 (AVG).

Belongs to the adenylosuccinate synthetase family. As to quaternary structure, homodimer. The cofactor is Mg(2+).

It localises to the cytoplasm. It carries out the reaction IMP + L-aspartate + GTP = N(6)-(1,2-dicarboxyethyl)-AMP + GDP + phosphate + 2 H(+). It participates in purine metabolism; AMP biosynthesis via de novo pathway; AMP from IMP: step 1/2. In terms of biological role, plays an important role in the de novo pathway of purine nucleotide biosynthesis. Catalyzes the first committed step in the biosynthesis of AMP from IMP. The sequence is that of Adenylosuccinate synthetase from Desulfitobacterium hafniense (strain DSM 10664 / DCB-2).